Here is a 1016-residue protein sequence, read N- to C-terminus: MPNSIWTSSDARAIHARMKKGDHLFLVDGSGFIFRAFHALPPLTRKTDGLPIGAVSGFCNMLWKLLRDARNTDVGVTPTHLAVIFDYSAKTFRKDLYDAYKANRSAPPEELIPQFGLIREATRAFNLPCIETEGFEADDIIATYARQAEATGADVTIVSSDKDLMQLVSPNVHMYDSMKDKQIGIPDVIEKWGVPPEKMIDLQAMTGDSVDNVPGIPGIGPKTAAQLLEEYGDLDTLLERATEIKQVKRRETILANIDMARLSRDLVRLRTDVPLDLDLDALVLEPQNGPKLIGFLKTMEFTTLTRRVAEACDCDASAIEPAIVRIEWGETARGPDLDAAEPEPVAGGIPEVSGESVPMPPRAKAKSAVEGAFSPADLAKARAEAFATLPFDHSAYVTIRDLVTLDRWIADARATGLVAFDTETTSLDAMQAELVGFSLAIADNTADPTGTKIRAAYVPLVHKNGVGDLLGGGLADNQIPMRDALPRLKALLEDESVLKVAQNLKYDYLLLKRYGIETRSFDDTMLISYVLDAGTGAHGMDPLSEKFLGHTPIPYKDVAGSGKANVTFDLVDIDRATHYAAEDADVTLRLWLVLKPRLAAAGLTSVYERLERPLLPVLARMEARGITVDRQILSRLSGELAQGAARLEDEIYVLAGERFNIGSPKQLGDILFGKMGLSGGSKTKTGQWSTSAQVLEDLAAAGFELPRKIVDWRQVTKLKSTYTDALPGYVHPETKRVHTSYSLASTTTGRLSSSEPNLQNIPVRTAEGRKIRTAFISTPGHKLISADYSQIELRVLAHVAEIPQLTKAFEDGVDIHAMTASEMFGVPVEGMPGEVRRRAKAINFGIIYGISAFGLANQLSIERSEAGDYIKKYFERFPGIRDYMESRKAMARDKGYVETIFGRRINYPEIRSSNPSVRAFNERAAINAPIQGSAADVIRRAMIKIEPALVEVGLADRVRMLLQVHDELIFEVEDQDVEKAMPVIVSVMENATMPALEMRVPLRVDARAATNWDEAH.

The 5'-3' exonuclease domain maps to 1-308; the sequence is MPNSIWTSSD…MEFTTLTRRV (308 aa). The disordered stretch occupies residues 334-361; that stretch reads GPDLDAAEPEPVAGGIPEVSGESVPMPP. Residues 394-630 form the 3'-5' exonuclease domain; the sequence is SAYVTIRDLV…MEARGITVDR (237 aa). A polymerase region spans residues 768–1016; the sequence is GRKIRTAFIS…RAATNWDEAH (249 aa).

Belongs to the DNA polymerase type-A family. Single-chain monomer with multiple functions.

The enzyme catalyses DNA(n) + a 2'-deoxyribonucleoside 5'-triphosphate = DNA(n+1) + diphosphate. Functionally, in addition to polymerase activity, this DNA polymerase exhibits 3'-5' and 5'-3' exonuclease activity. In Rhizobium leguminosarum, this protein is DNA polymerase I (polA).